Here is a 195-residue protein sequence, read N- to C-terminus: Ras-related protein Rab-31 (195 aa).

GTP is bound by residues glycine 16, glycine 18, lysine 19, serine 20, serine 21, aspartate 32, and histidine 33. Serine 20 lines the Mg(2+) pocket. Short sequence motifs (switch) lie at residues 30 to 42 and 63 to 79; these read HFDHNISPTIGAS and AGQERFHSLAPMYYRGS. Serine 36 carries the post-translational modification Phosphoserine. The GTP site is built by threonine 38, glycine 64, asparagine 119, aspartate 122, alanine 150, and lysine 151. Threonine 38 lines the Mg(2+) pocket. S-geranylgeranyl cysteine attachment occurs at residues cysteine 194 and cysteine 195.

The protein belongs to the small GTPase superfamily. Rab family. Interacts (in GDP-bound form) with RIN3 and GAPVD1, which function as guanine exchange factors (GEF). Interacts (in GTP-bound form) with EEA1. Interacts with NGFR. Interacts with EGFR. Interacts with OCRL. Interacts (in GTP-bound form) with APPL2; interaction contributes to or enhances recruitment of APPL2 to the phagosomes; interaction enhances Fc-gamma receptor-mediated phagocytosis through PI3K/Akt signaling in macrophages. Mg(2+) serves as cofactor. As to expression, detected in brain astrocytes, spleen and intestine (at protein level).

It is found in the early endosome. The protein resides in the golgi apparatus. The protein localises to the trans-Golgi network. Its subcellular location is the trans-Golgi network membrane. It localises to the cytoplasmic vesicle. It is found in the phagosome. The protein resides in the phagosome membrane. The catalysed reaction is GTP + H2O = GDP + phosphate + H(+). With respect to regulation, regulated by guanine nucleotide exchange factors (GEFs) including RIN3 and GAPVD1 which promote the exchange of bound GDP for free GTP. Regulated by GTPase activating proteins (GAPs) which increase the GTP hydrolysis activity. Inhibited by GDP dissociation inhibitors (GDIs) which prevent Rab-GDP dissociation. The small GTPases Rab are key regulators of intracellular membrane trafficking, from the formation of transport vesicles to their fusion with membranes. Rabs cycle between an inactive GDP-bound form and an active GTP-bound form that is able to recruit to membranes different set of downstream effectors directly responsible for vesicle formation, movement, tethering and fusion. Required for the integrity and for normal function of the Golgi apparatus and the trans-Golgi network. Plays a role in insulin-stimulated translocation of GLUT4 to the cell membrane. Plays a role in the maturation of phagosomes that engulf pathogens, such as S.aureus and Mycobacterium. Plays a role in M6PR transport from the trans-Golgi network to endosomes. Plays a role in the internalization of EGFR from the cell membrane into endosomes. The polypeptide is Ras-related protein Rab-31 (Rattus norvegicus (Rat)).